The primary structure comprises 449 residues: MREILHIQGGQCGNQIGAKFWEVVCAEHGIDSTGRYQGENDLQLERVNVYYNEASCGRFVPRAVLMDLEPGTMDSVRSGPYGQIFRPDNFVFGQSGAGNNWAKGHYTEGAELIDSVLDVVRKEAENCDCLQGFQVCHSLGGGTGSGMGTLLISKIREEYPDRMMLTFSVFPSPKVSDTVVEPYNATLSVHQLVENADECMVLDNEALYDICFRTLKLTTPSFGDLNHLISATMSGVTCCLRFPGQLNSDLRKLAVNLIPFPRLHFFMVGFAPLTSRGSQQYRALTVPELTQQMWDAKNMMCAADPRHGRYLTASAMFRGKMSTKEVDEQMINVQNKNSSYFVEWIPNNVKSTVCDIPPTGLKMASTFIGNSTSIQEMFRRVSEQFTAMFRRKAFLHWYTGEGMDEMEFTEAESNMNDLVSEYQQYQDATADEEEGYEYEEDEVEVQEEQ.

8 residues coordinate GTP: Gln11, Glu69, Ser138, Gly142, Thr143, Gly144, Asn204, and Asn226. Residue Glu69 coordinates Mg(2+). Residues 428 to 449 (ATADEEEGYEYEEDEVEVQEEQ) form a disordered region. The span at 429 to 449 (TADEEEGYEYEEDEVEVQEEQ) shows a compositional bias: acidic residues.

The protein belongs to the tubulin family. In terms of assembly, dimer of alpha and beta chains. A typical microtubule is a hollow water-filled tube with an outer diameter of 25 nm and an inner diameter of 15 nM. Alpha-beta heterodimers associate head-to-tail to form protofilaments running lengthwise along the microtubule wall with the beta-tubulin subunit facing the microtubule plus end conferring a structural polarity. Microtubules usually have 13 protofilaments but different protofilament numbers can be found in some organisms and specialized cells. It depends on Mg(2+) as a cofactor.

The protein localises to the cytoplasm. The protein resides in the cytoskeleton. Tubulin is the major constituent of microtubules, a cylinder consisting of laterally associated linear protofilaments composed of alpha- and beta-tubulin heterodimers. Microtubules grow by the addition of GTP-tubulin dimers to the microtubule end, where a stabilizing cap forms. Below the cap, tubulin dimers are in GDP-bound state, owing to GTPase activity of alpha-tubulin. The polypeptide is Tubulin beta-8 chain (TUBB8) (Arabidopsis thaliana (Mouse-ear cress)).